The sequence spans 159 residues: Betainyl-CoA thioesterase (159 aa).

Belongs to the betainyl-CoA thioesterase family.

The enzyme catalyses N,N,N-trimethylglycyl-CoA + H2O = glycine betaine + CoA + H(+). It participates in amine and polyamine metabolism; carnitine metabolism. Catalyzes the cleavage of betainyl-CoA (N,N,N-trimethylglycyl-CoA) into glycine betaine and coenzyme A. Is involved in a L-carnitine degradation pathway that allows P.aeruginosa to grow on L-carnitine as the sole source of carbon and nitrogen. The sequence is that of Betainyl-CoA thioesterase from Pseudomonas aeruginosa (strain ATCC 15692 / DSM 22644 / CIP 104116 / JCM 14847 / LMG 12228 / 1C / PRS 101 / PAO1).